The following is a 212-amino-acid chain: ER lumen protein-retaining receptor 2 (212 aa).

Residues 1–4 (MNIF) lie on the Lumenal side of the membrane. A helical transmembrane segment spans residues 5–24 (RLTGDLSHLAAIIILLLKIW). Over 25 to 32 (KSRSCAGI) the chain is Cytoplasmic. A helical transmembrane segment spans residues 33–52 (SGKSQLLFALVFTTRYLDLF). Residues 47–48 (RY) are interaction with the K-D-E-L motif on target proteins. At 53–58 (TSFISL) the chain is on the lumenal side. The helical transmembrane segment at 59–79 (YNTSMKLIYIACSYATVYLIY) threads the bilayer. Over 80–92 (MKFKATYDGNHDT) the chain is Cytoplasmic. A helical transmembrane segment spans residues 93-110 (FRVEFLIVPVGGLSFLVN). Residues 111–116 (HDFSPL) are Lumenal-facing. The chain crosses the membrane as a helical span at residues 117–135 (EILWTFSIYLESVAILPQL). Over 136-149 (FMISKTGEAETITT) the chain is Cytoplasmic. Residues 150-168 (HYLFFLGLYRALYLVNWIW) form a helical membrane-spanning segment. An interaction with the K-D-E-L motif on target proteins region spans residues 159-169 (RALYLVNWIWR). Over 169–178 (RYYFEGFFDL) the chain is Lumenal. A helical membrane pass occupies residues 179 to 199 (IAVVAGVVQTVLYCDFFYLYV). Topologically, residues 200–212 (TKVLKGKKLSLPA) are cytoplasmic. Residues 204–207 (KGKK) form an important for recycling of cargo proteins with the sequence motif K-D-E-L from the Golgi to the endoplasmic reticulum region.

Belongs to the ERD2 family.

Its subcellular location is the endoplasmic reticulum membrane. It localises to the golgi apparatus membrane. It is found in the cytoplasmic vesicle. The protein localises to the COPI-coated vesicle membrane. In terms of biological role, membrane receptor that binds the K-D-E-L sequence motif in the C-terminal part of endoplasmic reticulum resident proteins and maintains their localization in that compartment by participating to their vesicle-mediated recycling back from the Golgi. Binding is pH dependent, and is optimal at pH 5-5.4. The protein is ER lumen protein-retaining receptor 2 (KDELR2) of Gallus gallus (Chicken).